A 349-amino-acid polypeptide reads, in one-letter code: N-acetyltaurine hydrolase (349 aa).

A divalent metal cation-binding residues include His26, His28, Glu169, His201, His230, and Asp298.

The protein belongs to the metallo-dependent hydrolases superfamily. Phosphotriesterase family. Requires a divalent metal cation as cofactor.

Its subcellular location is the cytoplasm. The protein resides in the cytosol. It carries out the reaction N-acetyltaurine + H2O = taurine + acetate. It catalyses the reaction N-propanoyltaurine + H2O = propanoate + taurine. The catalysed reaction is N-acetyl-L-methionine + H2O = L-methionine + acetate. The enzyme catalyses N-acetyl-L-isoleucine + H2O = L-isoleucine + acetate. It carries out the reaction N-acetyl-L-leucine + H2O = L-leucine + acetate. It catalyses the reaction N-acetyl-L-valine + H2O = L-valine + acetate. In terms of biological role, N-acetyltaurine hydrolase that catalyzes the hydrolysis of N-acetyltaurine into taurine and acetate. PTER also acts on other N-acetyl amino acids (Met, Ile, Leu, Val) and N-propionyltaurine, but at lower rates. This Salmo salar (Atlantic salmon) protein is N-acetyltaurine hydrolase (pter).